Here is a 72-residue protein sequence, read N- to C-terminus: Translation initiation factor IF-1 (72 aa).

The 72-residue stretch at 1 to 72 folds into the S1-like domain; it reads MAKEEMLEFP…TKGRINYRFK (72 aa).

Belongs to the IF-1 family. In terms of assembly, component of the 30S ribosomal translation pre-initiation complex which assembles on the 30S ribosome in the order IF-2 and IF-3, IF-1 and N-formylmethionyl-tRNA(fMet); mRNA recruitment can occur at any time during PIC assembly.

Its subcellular location is the cytoplasm. Its function is as follows. One of the essential components for the initiation of protein synthesis. Stabilizes the binding of IF-2 and IF-3 on the 30S subunit to which N-formylmethionyl-tRNA(fMet) subsequently binds. Helps modulate mRNA selection, yielding the 30S pre-initiation complex (PIC). Upon addition of the 50S ribosomal subunit IF-1, IF-2 and IF-3 are released leaving the mature 70S translation initiation complex. The polypeptide is Translation initiation factor IF-1 (Paracoccus denitrificans (strain Pd 1222)).